The primary structure comprises 474 residues: Crocetin glucosyltransferase, chloroplastic (474 aa).

The transit peptide at M1 to S45 directs the protein to the chloroplast. Residue H17 is the Proton acceptor of the active site. An anthocyanidin is bound at residue H17. UDP-alpha-D-glucose contacts are provided by Q346, H361, W364, N365, S366, E369, D385, and Q386.

Belongs to the UDP-glycosyltransferase family. Ubiquitous.

It is found in the plastid. It localises to the chloroplast. It carries out the reaction crocetin + UDP-alpha-D-glucose = beta-D-glucosyl crocetin + UDP. It catalyses the reaction beta-D-glucosyl crocetin + UDP-alpha-D-glucose = bis(beta-D-glucosyl) crocetin + UDP. The catalysed reaction is beta-D-gentiobiosyl crocetin + UDP-alpha-D-glucose = beta-D-gentiobiosyl beta-D-glucosyl crocetin + UDP. Glucosyltransferase acting on a broad range of substrates, including crocetin, 4-coumaric acid, caffeic acid and ferulic acid. No activity with indol-3-acetic acid, bixin and norbixin, and no formation of O-glucosides. Involved with UGT94E5 in sequential glycosylation of crocetin to crocin (bis(beta-D-gentiobiosyl) crocetin). This is Crocetin glucosyltransferase, chloroplastic (UGT75L6) from Gardenia jasminoides (Cape jasmine).